The primary structure comprises 379 residues: MPVPEQKQTVQLSSPMNAVSSSEDIKPPLGLNGVMKVPAHRIGTLSLSLTKHICAICGDRSSGKHYGVYSCEGCKGFFKRTVRKDLTYTCRDNKDCMIDKRQRNRCQYCRYQKCLAMGMKREAVQEERQRAKERSEAEFGGCANEDMPVEKILEAELAVEPKTETYVEANLSPSANSPNDPVTNICQAADKQLFTLVEWAKRIPHFSDLPLDDQVILLRAGWNELLIASFSHRSIAVKDGILLATGLHVHRNSAHTAGVGAIFDRVLTELVSKMRDMQMDKTELGCLRAIVLFNPDSKGLSNPSEVEALRERVYASLEAYCKHKYPDQPGRFAKLLLRLPALRSIGLKCLEHLFFFKLIGDTPIDTFLMEMLEAPHQIT.

Residues 1–22 (MPVPEQKQTVQLSSPMNAVSSS) are compositionally biased toward polar residues. Residues 1–24 (MPVPEQKQTVQLSSPMNAVSSSED) are disordered. Residues 1–53 (MPVPEQKQTVQLSSPMNAVSSSEDIKPPLGLNGVMKVPAHRIGTLSLSLTKHI) are modulating. The segment at residues 51–126 (KHICAICGDR…MGMKREAVQE (76 aa)) is a DNA-binding region (nuclear receptor). Zn(2+) contacts are provided by Cys54, Cys57, Cys71, and Cys74. The segment at 54–74 (CAICGDRSSGKHYGVYSCEGC) adopts an NR C4-type zinc-finger fold. Residues 79 to 84 (KRTVRK) are nuclear localization signal. Residues Cys90, Cys96, Cys106, and Cys109 each contribute to the Zn(2+) site. The segment at 90 to 109 (CRDNKDCMIDKRQRNRCQYC) adopts an NR C4-type zinc-finger fold. The tract at residues 120–141 (KREAVQEERQRAKERSEAEFGG) is hinge. The 232-residue stretch at 144 to 375 (NEDMPVEKIL…TFLMEMLEAP (232 aa)) folds into the NR LBD domain. 9-cis-retinoate contacts are provided by Arg233 and Ala244. All-trans-retinoate contacts are provided by Arg233 and Ala244. Positions 265–285 (RVLTELVSKMRDMQMDKTELG) are required for nuclear export. Residues 364-375 (IDTFLMEMLEAP) are AF-2.

The protein belongs to the nuclear hormone receptor family. NR2 subfamily. In terms of assembly, homodimer. Heterodimer; with a rar molecule. Binds DNA preferentially as a rar/rxr heterodimer. As to expression, uniform expression from the blastula to mid-gastrula stages. At 12 hours post-fertilization (hpf), expressed strongly in the tail and weakly elsewhere. At 24 hpf, weak expression in the forebrain, eyes and pharyngeal endoderm and continued expression in the tail mesoderm. At 48 hpf, anterior expression limited to ventral cells underlying the head, medial expression in the pectoral fin bud mesoderm and continued tail expression.

Its subcellular location is the nucleus. Its function is as follows. Receptor for retinoic acid that acts as a transcription factor. Forms homo- or heterodimers with retinoic acid receptors (rars) and binds to target response elements in response to their ligands, all-trans or 9-cis retinoic acid, to regulate gene expression in various biological processes. The rar/rxr heterodimers bind to the retinoic acid response elements (RARE) composed of tandem 5'-AGGTCA-3' sites known as DR1-DR5 to regulate transcription. The high affinity ligand for rxrs is 9-cis retinoic acid. In the absence of ligand, the rar/rxr heterodimers associate with a multiprotein complex containing transcription corepressors that induce histone deacetylation, chromatin condensation and transcriptional suppression. On ligand binding, the corepressors dissociate from the receptors and coactivators are recruited leading to transcriptional activation. The chain is Retinoic acid receptor RXR-alpha-B (rxrab) from Danio rerio (Zebrafish).